A 261-amino-acid chain; its full sequence is tRNA pseudouridine synthase A (261 aa).

The Nucleophile role is filled by Asp51. Tyr109 provides a ligand contact to substrate.

This sequence belongs to the tRNA pseudouridine synthase TruA family. As to quaternary structure, homodimer.

It catalyses the reaction uridine(38/39/40) in tRNA = pseudouridine(38/39/40) in tRNA. Formation of pseudouridine at positions 38, 39 and 40 in the anticodon stem and loop of transfer RNAs. This is tRNA pseudouridine synthase A from Shewanella baltica (strain OS185).